Consider the following 352-residue polypeptide: UPF0324 membrane protein RA0957 (352 aa).

A run of 10 helical transmembrane segments spans residues 24-43 (VVSY…SAQF), 48-67 (YGAP…NFLS), 104-126 (LGVS…AIIV), 136-158 (LSLL…LNAV), 169-191 (LALT…PVLA), 201-223 (SGVF…FAMS), 235-257 (IVRV…VLGA), 272-294 (GFVL…AAAG), 301-318 (SRWL…KTSV), and 328-350 (HVTL…LLWY).

This sequence belongs to the UPF0324 family.

It is found in the cell membrane. The polypeptide is UPF0324 membrane protein RA0957 (Rhizobium meliloti (strain 1021) (Ensifer meliloti)).